The chain runs to 412 residues: Multifunctional CCA protein (412 aa).

ATP contacts are provided by Gly8 and Arg11. Positions 8 and 11 each coordinate CTP. Residues Asp21 and Asp23 each contribute to the Mg(2+) site. 3 residues coordinate ATP: Arg91, Arg137, and Arg140. Residues Arg91, Arg137, and Arg140 each contribute to the CTP site. Residues 228-329 (TGIHTLMTLS…VKLFDSIDAW (102 aa)) form the HD domain.

This sequence belongs to the tRNA nucleotidyltransferase/poly(A) polymerase family. Bacterial CCA-adding enzyme type 1 subfamily. Monomer. Can also form homodimers and oligomers. Mg(2+) serves as cofactor. Requires Ni(2+) as cofactor.

It catalyses the reaction a tRNA precursor + 2 CTP + ATP = a tRNA with a 3' CCA end + 3 diphosphate. It carries out the reaction a tRNA with a 3' CCA end + 2 CTP + ATP = a tRNA with a 3' CCACCA end + 3 diphosphate. Functionally, catalyzes the addition and repair of the essential 3'-terminal CCA sequence in tRNAs without using a nucleic acid template. Adds these three nucleotides in the order of C, C, and A to the tRNA nucleotide-73, using CTP and ATP as substrates and producing inorganic pyrophosphate. tRNA 3'-terminal CCA addition is required both for tRNA processing and repair. Also involved in tRNA surveillance by mediating tandem CCA addition to generate a CCACCA at the 3' terminus of unstable tRNAs. While stable tRNAs receive only 3'-terminal CCA, unstable tRNAs are marked with CCACCA and rapidly degraded. This is Multifunctional CCA protein from Escherichia coli O139:H28 (strain E24377A / ETEC).